We begin with the raw amino-acid sequence, 430 residues long: Lipoyl synthase, mitochondrial (430 aa).

The N-terminal 37 residues, 1 to 37, are a transit peptide targeting the mitochondrion; sequence MATSAGKLRTLYSAHSSLSSLPPSARPTLQLATLRSY. Residues 39-55 show a composition bias toward polar residues; it reads TTTPHDSPIGNTSNTPP. The segment at 39–58 is disordered; sequence TTTPHDSPIGNTSNTPPTVK. The [4Fe-4S] cluster site is built by Cys141, Cys146, Cys152, Cys172, Cys176, Cys179, and Ser387. Positions 155-376 constitute a Radical SAM core domain; the sequence is GSSKSAATAT…KERALEMGFL (222 aa).

This sequence belongs to the radical SAM superfamily. Lipoyl synthase family. Requires [4Fe-4S] cluster as cofactor.

It localises to the mitochondrion. The enzyme catalyses [[Fe-S] cluster scaffold protein carrying a second [4Fe-4S](2+) cluster] + N(6)-octanoyl-L-lysyl-[protein] + 2 oxidized [2Fe-2S]-[ferredoxin] + 2 S-adenosyl-L-methionine + 4 H(+) = [[Fe-S] cluster scaffold protein] + N(6)-[(R)-dihydrolipoyl]-L-lysyl-[protein] + 4 Fe(3+) + 2 hydrogen sulfide + 2 5'-deoxyadenosine + 2 L-methionine + 2 reduced [2Fe-2S]-[ferredoxin]. Its pathway is protein modification; protein lipoylation via endogenous pathway; protein N(6)-(lipoyl)lysine from octanoyl-[acyl-carrier-protein]: step 2/2. Catalyzes the radical-mediated insertion of two sulfur atoms into the C-6 and C-8 positions of the octanoyl moiety bound to the lipoyl domains of lipoate-dependent enzymes, thereby converting the octanoylated domains into lipoylated derivatives. The chain is Lipoyl synthase, mitochondrial from Ajellomyces capsulatus (strain G186AR / H82 / ATCC MYA-2454 / RMSCC 2432) (Darling's disease fungus).